A 248-amino-acid polypeptide reads, in one-letter code: Small ribosomal subunit protein uS2 (248 aa).

Belongs to the universal ribosomal protein uS2 family.

The sequence is that of Small ribosomal subunit protein uS2 from Alkalilimnicola ehrlichii (strain ATCC BAA-1101 / DSM 17681 / MLHE-1).